Consider the following 311-residue polypeptide: Aspartate carbamoyltransferase catalytic subunit (311 aa).

Residues arginine 55 and threonine 56 each contribute to the carbamoyl phosphate site. Lysine 85 is a binding site for L-aspartate. Carbamoyl phosphate contacts are provided by arginine 106, histidine 135, and glutamine 138. Residues arginine 168 and arginine 230 each contribute to the L-aspartate site. Carbamoyl phosphate is bound by residues leucine 268 and proline 269.

The protein belongs to the aspartate/ornithine carbamoyltransferase superfamily. ATCase family. As to quaternary structure, heterododecamer (2C3:3R2) of six catalytic PyrB chains organized as two trimers (C3), and six regulatory PyrI chains organized as three dimers (R2).

It catalyses the reaction carbamoyl phosphate + L-aspartate = N-carbamoyl-L-aspartate + phosphate + H(+). It participates in pyrimidine metabolism; UMP biosynthesis via de novo pathway; (S)-dihydroorotate from bicarbonate: step 2/3. Catalyzes the condensation of carbamoyl phosphate and aspartate to form carbamoyl aspartate and inorganic phosphate, the committed step in the de novo pyrimidine nucleotide biosynthesis pathway. The chain is Aspartate carbamoyltransferase catalytic subunit from Yersinia pseudotuberculosis serotype O:1b (strain IP 31758).